The chain runs to 60 residues: Temporin-CG1 (60 aa).

Positions Met1 to Cys22 are cleaved as a signal peptide. A propeptide spans Glu23–Glu43 (removed in mature form).

Expressed by the skin glands.

The protein localises to the secreted. In terms of biological role, antimicrobial peptide active against a variety of Gram-positive and some Gram-negative bacterial strains. Has antifungal activity against a slime mold isolate. Has weak hemolytic activity against human erythrocytes. This Amolops chunganensis (Chungan torrent frog) protein is Temporin-CG1.